The chain runs to 180 residues: Large ribosomal subunit protein uL6 (180 aa).

Belongs to the universal ribosomal protein uL6 family. In terms of assembly, part of the 50S ribosomal subunit.

In terms of biological role, this protein binds to the 23S rRNA, and is important in its secondary structure. It is located near the subunit interface in the base of the L7/L12 stalk, and near the tRNA binding site of the peptidyltransferase center. The protein is Large ribosomal subunit protein uL6 of Clostridium kluyveri (strain NBRC 12016).